The sequence spans 156 residues: Transcription elongation factor GreA (156 aa).

The stretch at 46–73 forms a coiled coil; the sequence is AEYHAAREKQSFIEGRIKELEALLSLAE.

Belongs to the GreA/GreB family.

Its function is as follows. Necessary for efficient RNA polymerase transcription elongation past template-encoded arresting sites. The arresting sites in DNA have the property of trapping a certain fraction of elongating RNA polymerases that pass through, resulting in locked ternary complexes. Cleavage of the nascent transcript by cleavage factors such as GreA or GreB allows the resumption of elongation from the new 3'terminus. GreA releases sequences of 2 to 3 nucleotides. The polypeptide is Transcription elongation factor GreA (Cereibacter sphaeroides (strain ATCC 17025 / ATH 2.4.3) (Rhodobacter sphaeroides)).